Consider the following 231-residue polypeptide: MIP18 family protein YHR122W (231 aa).

2 disordered regions span residues 1–26 (MSEFLNENPDILEENQLPTRKEDSTK) and 75–100 (LTSDEDSLPAESEDESVAGGGKEEEE). Serine 2 carries the post-translational modification N-acetylserine. Over residues 76-90 (TSDEDSLPAESEDES) the composition is skewed to acidic residues.

Belongs to the MIP18 family.

Its function is as follows. May play a role in chromosome segregation through establishment of sister chromatid cohesion. The protein is MIP18 family protein YHR122W of Saccharomyces cerevisiae (strain ATCC 204508 / S288c) (Baker's yeast).